A 208-amino-acid chain; its full sequence is MSKMAEQKAAAVDGLGGAGAADAAPAGEAAAARVRPVETLLRAAPLGLCVAAMTVMLRDQQSNEYGTVAYSDLGGFKYLVYANGLCAAYSLVSAFYTAVPRPATVSRSWVVFLLDQVFTYLILAAGAAAAELLYLAYNGDKEVTWSEACGVFGSFCRQARTSVAITFGTVLCFILLSLISSYRLFSAYEAPPSSALGSKGVEIAAYPR.

Topologically, residues 1–36 (MSKMAEQKAAAVDGLGGAGAADAAPAGEAAAARVRP) are cytoplasmic. Residues 37–57 (VETLLRAAPLGLCVAAMTVML) traverse the membrane as a helical segment. The Extracellular segment spans residues 58–78 (RDQQSNEYGTVAYSDLGGFKY). A helical membrane pass occupies residues 79-99 (LVYANGLCAAYSLVSAFYTAV). The Cytoplasmic segment spans residues 100-108 (PRPATVSRS). Residues 109–129 (WVVFLLDQVFTYLILAAGAAA) form a helical membrane-spanning segment. Over 130 to 161 (AELLYLAYNGDKEVTWSEACGVFGSFCRQART) the chain is Extracellular. A helical membrane pass occupies residues 162–182 (SVAITFGTVLCFILLSLISSY). The Cytoplasmic portion of the chain corresponds to 183 to 208 (RLFSAYEAPPSSALGSKGVEIAAYPR).

It belongs to the Casparian strip membrane proteins (CASP) family. Homodimer and heterodimers.

It is found in the cell membrane. The polypeptide is CASP-like protein 2A1 (Sorghum bicolor (Sorghum)).